The sequence spans 439 residues: Ribosomal protein uS12 methylthiotransferase RimO (439 aa).

Positions 4–114 (PKVGFVSLGR…VVRAVHGVAP (111 aa)) constitute an MTTase N-terminal domain. Positions 133 to 370 (LTPRHYAYLK…MEHQQAISTA (238 aa)) constitute a Radical SAM core domain. Cysteine 147, cysteine 151, and cysteine 154 together coordinate [4Fe-4S] cluster. The TRAM domain occupies 373–439 (STRVGREIDV…EYDLWGERIA (67 aa)).

This sequence belongs to the methylthiotransferase family. RimO subfamily. Requires [4Fe-4S] cluster as cofactor.

It localises to the cytoplasm. It catalyses the reaction L-aspartate(89)-[ribosomal protein uS12]-hydrogen + (sulfur carrier)-SH + AH2 + 2 S-adenosyl-L-methionine = 3-methylsulfanyl-L-aspartate(89)-[ribosomal protein uS12]-hydrogen + (sulfur carrier)-H + 5'-deoxyadenosine + L-methionine + A + S-adenosyl-L-homocysteine + 2 H(+). Functionally, catalyzes the methylthiolation of an aspartic acid residue of ribosomal protein uS12. The chain is Ribosomal protein uS12 methylthiotransferase RimO from Bordetella bronchiseptica (strain ATCC BAA-588 / NCTC 13252 / RB50) (Alcaligenes bronchisepticus).